A 296-amino-acid chain; its full sequence is NAD kinase (296 aa).

Catalysis depends on D73, which acts as the Proton acceptor. NAD(+) contacts are provided by residues 73-74 (DG), K78, 151-152 (NE), R178, D180, and 191-196 (TAHAMS).

It belongs to the NAD kinase family. The cofactor is a divalent metal cation.

Its subcellular location is the cytoplasm. The enzyme catalyses NAD(+) + ATP = ADP + NADP(+) + H(+). In terms of biological role, involved in the regulation of the intracellular balance of NAD and NADP, and is a key enzyme in the biosynthesis of NADP. Catalyzes specifically the phosphorylation on 2'-hydroxyl of the adenosine moiety of NAD to yield NADP. This chain is NAD kinase, found in Francisella tularensis subsp. holarctica (strain FTNF002-00 / FTA).